A 390-amino-acid chain; its full sequence is GTPase Obg (390 aa).

One can recognise an Obg domain in the interval 1-159 (MKFVDEASVK…RELRLELLLL (159 aa)). In terms of domain architecture, OBG-type G spans 160–333 (ADVGMLGLPN…LCFKLGEFME (174 aa)). GTP-binding positions include 166-173 (GLPNAGKS), 191-195 (FTTLI), 213-216 (DIPG), 283-286 (NKVD), and 314-316 (SAV). Mg(2+)-binding residues include Ser173 and Thr193.

It belongs to the TRAFAC class OBG-HflX-like GTPase superfamily. OBG GTPase family. In terms of assembly, monomer. The cofactor is Mg(2+).

Its subcellular location is the cytoplasm. In terms of biological role, an essential GTPase which binds GTP, GDP and possibly (p)ppGpp with moderate affinity, with high nucleotide exchange rates and a fairly low GTP hydrolysis rate. Plays a role in control of the cell cycle, stress response, ribosome biogenesis and in those bacteria that undergo differentiation, in morphogenesis control. This is GTPase Obg from Vibrio atlanticus (strain LGP32) (Vibrio splendidus (strain Mel32)).